A 275-amino-acid polypeptide reads, in one-letter code: MANQDLIPVVVNGAAGKMGREVIKAVAQAPDLQLVGAVDHNPSLQGQDIGEVVGIAPLEVPVLADLQSVLVLATQEKIQGVMVDFTHPSGVYDNVRSAIAYGVRPVVGTTGLSEQQIQDLGDFAEKASTGCLIAPNFAIGVLLMQQAAVQACQYFDHVEIIELHHNQKADAPSGTAIKTAQMLAEMGKTFNPPAVEEKETIAGAKGGLGPGQIPIHSIRLPGLIAHQEVLFGSPGQLYTIRHDTTDRACYMPGVLLGIRKVVELKGLVYGLEKLL.

NAD(+)-binding positions include 13–18 (GAAGKM), 108–110 (GTT), and 134–137 (APNF). Residue His-164 is the Proton donor/acceptor of the active site. Residue His-165 coordinates (S)-2,3,4,5-tetrahydrodipicolinate. Lys-168 functions as the Proton donor in the catalytic mechanism. 174 to 175 (GT) serves as a coordination point for (S)-2,3,4,5-tetrahydrodipicolinate.

The protein belongs to the DapB family.

The protein resides in the cytoplasm. The enzyme catalyses (S)-2,3,4,5-tetrahydrodipicolinate + NAD(+) + H2O = (2S,4S)-4-hydroxy-2,3,4,5-tetrahydrodipicolinate + NADH + H(+). It carries out the reaction (S)-2,3,4,5-tetrahydrodipicolinate + NADP(+) + H2O = (2S,4S)-4-hydroxy-2,3,4,5-tetrahydrodipicolinate + NADPH + H(+). It participates in amino-acid biosynthesis; L-lysine biosynthesis via DAP pathway; (S)-tetrahydrodipicolinate from L-aspartate: step 4/4. Functionally, catalyzes the conversion of 4-hydroxy-tetrahydrodipicolinate (HTPA) to tetrahydrodipicolinate. The polypeptide is 4-hydroxy-tetrahydrodipicolinate reductase (Synechocystis sp. (strain ATCC 27184 / PCC 6803 / Kazusa)).